The sequence spans 107 residues: Anti-adapter protein IraM (107 aa).

This sequence belongs to the IraM/RssC family.

It localises to the cytoplasm. In terms of biological role, inhibits RpoS proteolysis by regulating RssB activity, thereby increasing the stability of the sigma stress factor RpoS during magnesium starvation. This is Anti-adapter protein IraM from Shigella sonnei (strain Ss046).